Here is a 232-residue protein sequence, read N- to C-terminus: Urease accessory protein UreF (232 aa).

Belongs to the UreF family. As to quaternary structure, ureD, UreF and UreG form a complex that acts as a GTP-hydrolysis-dependent molecular chaperone, activating the urease apoprotein by helping to assemble the nickel containing metallocenter of UreC. The UreE protein probably delivers the nickel.

Its subcellular location is the cytoplasm. Required for maturation of urease via the functional incorporation of the urease nickel metallocenter. This Azorhizobium caulinodans (strain ATCC 43989 / DSM 5975 / JCM 20966 / LMG 6465 / NBRC 14845 / NCIMB 13405 / ORS 571) protein is Urease accessory protein UreF.